Here is a 682-residue protein sequence, read N- to C-terminus: ATP-dependent DNA helicase RecG (682 aa).

The interval 46-139 is wedge domain; that stretch reads ELRDLEEVKH…LKNGPHQEDK (94 aa). Positions 271 to 432 constitute a Helicase ATP-binding domain; it reads DMSSPYRMNR…VFGEMDVSVI (162 aa). 284–291 is an ATP binding site; it reads GDVGSGKT. The short motif at 385 to 388 is the DEAH box element; the sequence is DEQH. The 161-residue stretch at 451–611 folds into the Helicase C-terminal domain; that stretch reads MLDRILAFVE…GFELSEKDLE (161 aa).

The protein belongs to the helicase family. RecG subfamily. In terms of assembly, monomer. Interacts with SSB (sbbA), via the latter's 6 C-terminal residues. Colocalizes with DNA pol III subunit gamma/tau (dnaX).

It localises to the cytoplasm. The protein localises to the nucleoid. It catalyses the reaction Couples ATP hydrolysis with the unwinding of duplex DNA by translocating in the 3'-5' direction.. The catalysed reaction is ATP + H2O = ADP + phosphate + H(+). Replication fork regression on Holliday junctions (HJ) is inhibited by DisA; DisA inhibits the ATPase activity of RecG. Critical role in recombination and DNA repair. Helps process Holliday junction intermediates to mature products by catalyzing branch migration. Has a DNA unwinding activity characteristic of a DNA helicase with 3'-5' polarity. Unwinds branched duplex DNA (Y-DNA), Holliday junction (HJ) DNA and partially replicated forks as well as catalyzing fork reversal/regression. Does not seem to unwind R-loops. Inhibits the diadenylate cyclase (DAC) activity of DisA in the presence but not absence of HJ DNA, possibly by relocating DisA from the junction. The sequence is that of ATP-dependent DNA helicase RecG from Bacillus subtilis (strain 168).